Here is a 49-residue protein sequence, read N- to C-terminus: Large ribosomal subunit protein bL33B (49 aa).

The protein belongs to the bacterial ribosomal protein bL33 family.

The protein is Large ribosomal subunit protein bL33B of Bacillus anthracis.